The primary structure comprises 503 residues: UDP-N-acetylmuramoylalanine--D-glutamate ligase (503 aa).

129 to 135 serves as a coordination point for ATP; sequence GTNGKTT. The disordered stretch occupies residues 284-305; the sequence is DSEAEGEGKPRRRKADATAQEA.

This sequence belongs to the MurCDEF family.

It localises to the cytoplasm. It carries out the reaction UDP-N-acetyl-alpha-D-muramoyl-L-alanine + D-glutamate + ATP = UDP-N-acetyl-alpha-D-muramoyl-L-alanyl-D-glutamate + ADP + phosphate + H(+). Its pathway is cell wall biogenesis; peptidoglycan biosynthesis. In terms of biological role, cell wall formation. Catalyzes the addition of glutamate to the nucleotide precursor UDP-N-acetylmuramoyl-L-alanine (UMA). The protein is UDP-N-acetylmuramoylalanine--D-glutamate ligase of Cupriavidus pinatubonensis (strain JMP 134 / LMG 1197) (Cupriavidus necator (strain JMP 134)).